The following is a 154-amino-acid chain: 6,7-dimethyl-8-ribityllumazine synthase (154 aa).

5-amino-6-(D-ribitylamino)uracil-binding positions include Trp22, 56–58 (AWE), and 80–82 (CVI). (2S)-2-hydroxy-3-oxobutyl phosphate is bound at residue 85-86 (DT). His88 (proton donor) is an active-site residue. Asn113 provides a ligand contact to 5-amino-6-(D-ribitylamino)uracil. Arg127 contacts (2S)-2-hydroxy-3-oxobutyl phosphate.

This sequence belongs to the DMRL synthase family. Forms an icosahedral capsid composed of 60 subunits, arranged as a dodecamer of pentamers.

It catalyses the reaction (2S)-2-hydroxy-3-oxobutyl phosphate + 5-amino-6-(D-ribitylamino)uracil = 6,7-dimethyl-8-(1-D-ribityl)lumazine + phosphate + 2 H2O + H(+). Its pathway is cofactor biosynthesis; riboflavin biosynthesis; riboflavin from 2-hydroxy-3-oxobutyl phosphate and 5-amino-6-(D-ribitylamino)uracil: step 1/2. Its function is as follows. Catalyzes the formation of 6,7-dimethyl-8-ribityllumazine by condensation of 5-amino-6-(D-ribitylamino)uracil with 3,4-dihydroxy-2-butanone 4-phosphate. This is the penultimate step in the biosynthesis of riboflavin. This chain is 6,7-dimethyl-8-ribityllumazine synthase, found in Xanthomonas campestris pv. campestris (strain 8004).